The primary structure comprises 316 residues: MPMQGAQRKLLGSLNSTPTATSNLGLAANHTGAPCLEVSIPDGLFLSLGLVSLVENVLVVAAIAKNRNLHSSMYCFICCLALSDLLVSGSNMLETAVILLLETGALATRTSVVQQLHNTINVLTCSSMLCSLCFLGAIAVDRYISIFYALRYHSIMTLPRAQRAIAAIWVASVLSSTLFITYYDHAAVLLCLVVFFLAMLVLMAVLYVHMLARACQHAHGIIRLHKRQTPAHQAFGLRGAATLTILLGIFFLCWGPFFLHLTLVVFCPQHLTCSCIFKNFKVFLTLIICNTIIDPLIYAFRSQELRRTLKEVLCSW.

Residues 1–37 (MPMQGAQRKLLGSLNSTPTATSNLGLAANHTGAPCLE) are Extracellular-facing. Asn-29 carries N-linked (GlcNAc...) asparagine glycosylation. The helical transmembrane segment at 38–63 (VSIPDGLFLSLGLVSLVENVLVVAAI) threads the bilayer. Over 64-72 (AKNRNLHSS) the chain is Cytoplasmic. The helical transmembrane segment at 73–93 (MYCFICCLALSDLLVSGSNML) threads the bilayer. Residues 94-118 (ETAVILLLETGALATRTSVVQQLHN) are Extracellular-facing. Residues 119-140 (TINVLTCSSMLCSLCFLGAIAV) traverse the membrane as a helical segment. At 141 to 163 (DRYISIFYALRYHSIMTLPRAQR) the chain is on the cytoplasmic side. Residues 164-183 (AIAAIWVASVLSSTLFITYY) form a helical membrane-spanning segment. The Extracellular portion of the chain corresponds to 184 to 191 (DHAAVLLC). The helical transmembrane segment at 192 to 211 (LVVFFLAMLVLMAVLYVHML) threads the bilayer. Over 212 to 240 (ARACQHAHGIIRLHKRQTPAHQAFGLRGA) the chain is Cytoplasmic. A helical transmembrane segment spans residues 241–266 (ATLTILLGIFFLCWGPFFLHLTLVVF). Over 267–279 (CPQHLTCSCIFKN) the chain is Extracellular. Residues 280–300 (FKVFLTLIICNTIIDPLIYAF) traverse the membrane as a helical segment. Residues 301–316 (RSQELRRTLKEVLCSW) lie on the Cytoplasmic side of the membrane. Cys-314 is lipidated: S-palmitoyl cysteine.

The protein belongs to the G-protein coupled receptor 1 family. Interacts with MGRN1, but does not undergo MGRN1-mediated ubiquitination; this interaction competes with GNAS-binding and thus inhibits agonist-induced cAMP production. Interacts with OPN3; the interaction results in a decrease in MC1R-mediated cAMP signaling and ultimately a decrease in melanin production in melanocytes.

It localises to the cell membrane. Functionally, receptor for MSH (alpha, beta and gamma) and ACTH. The activity of this receptor is mediated by G proteins which activate adenylate cyclase. Mediates melanogenesis, the production of eumelanin (black/brown) and phaeomelanin (red/yellow), via regulation of cAMP signaling in melanocytes. The polypeptide is Melanocyte-stimulating hormone receptor (MC1R) (Saguinus geoffroyi (Geoffroy's tamarin)).